A 169-amino-acid chain; its full sequence is Small ribosomal subunit protein uS5 (169 aa).

Positions 14 to 77 constitute an S5 DRBM domain; that stretch reads LQEKVVEVRR…EDAKKNLIVV (64 aa).

Belongs to the universal ribosomal protein uS5 family. As to quaternary structure, part of the 30S ribosomal subunit. Contacts proteins S4 and S8.

With S4 and S12 plays an important role in translational accuracy. In terms of biological role, located at the back of the 30S subunit body where it stabilizes the conformation of the head with respect to the body. The chain is Small ribosomal subunit protein uS5 from Clostridioides difficile (strain 630) (Peptoclostridium difficile).